The primary structure comprises 238 residues: ATP synthase subunit a (238 aa).

5 helical membrane passes run L17 to C37, F75 to P95, D112 to I132, Y172 to I192, and I194 to I214.

Belongs to the ATPase A chain family. F-type ATPases have 2 components, CF(1) - the catalytic core - and CF(0) - the membrane proton channel. CF(1) has five subunits: alpha(3), beta(3), gamma(1), delta(1), epsilon(1). CF(0) has three main subunits: a(1), b(2) and c(9-12). The alpha and beta chains form an alternating ring which encloses part of the gamma chain. CF(1) is attached to CF(0) by a central stalk formed by the gamma and epsilon chains, while a peripheral stalk is formed by the delta and b chains.

It is found in the cell membrane. In terms of biological role, key component of the proton channel; it plays a direct role in the translocation of protons across the membrane. This chain is ATP synthase subunit a, found in Listeria monocytogenes serovar 1/2a (strain ATCC BAA-679 / EGD-e).